The following is a 315-amino-acid chain: Ribosomal protein L11 methyltransferase (315 aa).

Positions 163, 184, 206, and 248 each coordinate S-adenosyl-L-methionine.

The protein belongs to the methyltransferase superfamily. PrmA family.

The protein resides in the cytoplasm. The catalysed reaction is L-lysyl-[protein] + 3 S-adenosyl-L-methionine = N(6),N(6),N(6)-trimethyl-L-lysyl-[protein] + 3 S-adenosyl-L-homocysteine + 3 H(+). Methylates ribosomal protein L11. The polypeptide is Ribosomal protein L11 methyltransferase (Lacticaseibacillus paracasei (strain ATCC 334 / BCRC 17002 / CCUG 31169 / CIP 107868 / KCTC 3260 / NRRL B-441) (Lactobacillus paracasei)).